The sequence spans 517 residues: MHQTLGAVRLAYRSRIANLVKSGMIDNAVQVFDEMRHSSYRVFSFDYNRFIGVLVRESRFELAEAIYWDMKPMGFSLIPFTYSRFISGLCKVKKFDLIDALLSDMETLGFIPDIWAFNVYLDLLCRENKVGFAVQTFFCMVQRGREPDVVSYTILINGLFRAGKVTDAVEIWNAMIRSGVSPDNKACAALVVGLCHARKVDLAYEMVAEEIKSARVKLSTVVYNALISGFCKAGRIEKAEALKSYMSKIGCEPDLVTYNVLLNYYYDNNMLKRAEGVMAEMVRSGIQLDAYSYNQLLKRHCRVSHPDKCYNFMVKEMEPRGFCDVVSYSTLIETFCRASNTRKAYRLFEEMRQKGMVMNVVTYTSLIKAFLREGNSSVAKKLLDQMTELGLSPDRIFYTTILDHLCKSGNVDKAYGVFNDMIEHEITPDAISYNSLISGLCRSGRVTEAIKLFEDMKGKECCPDELTFKFIIGGLIRGKKLSAAYKVWDQMMDKGFTLDRDVSDTLIKASCSMSADA.

A mitochondrion-targeting transit peptide spans 1–57; that stretch reads MHQTLGAVRLAYRSRIANLVKSGMIDNAVQVFDEMRHSSYRVFSFDYNRFIGVLVRE. PPR repeat units lie at residues 8–42, 43–77, 78–112, 113–147, 148–182, 183–218, 219–253, 254–288, 289–320, 324–358, 359–393, 394–428, 429–463, and 464–498; these read VRLAYRSRIANLVKSGMIDNAVQVFDEMRHSSYRV, FSFDYNRFIGVLVRESRFELAEAIYWDMKPMGFSL, IPFTYSRFISGLCKVKKFDLIDALLSDMETLGFIP, DIWAFNVYLDLLCRENKVGFAVQTFFCMVQRGREP, DVVSYTILINGLFRAGKVTDAVEIWNAMIRSGVSP, DNKACAALVVGLCHARKVDLAYEMVAEEIKSARVKL, STVVYNALISGFCKAGRIEKAEALKSYMSKIGCEP, DLVTYNVLLNYYYDNNMLKRAEGVMAEMVRSGIQL, DAYSYNQLLKRHCRVSHPDKCYNFMVKEMEPR, DVVSYSTLIETFCRASNTRKAYRLFEEMRQKGMVM, NVVTYTSLIKAFLREGNSSVAKKLLDQMTELGLSP, DRIFYTTILDHLCKSGNVDKAYGVFNDMIEHEITP, DAISYNSLISGLCRSGRVTEAIKLFEDMKGKECCP, and DELTFKFIIGGLIRGKKLSAAYKVWDQMMDKGFTL.

Belongs to the PPR family. P subfamily.

It is found in the mitochondrion. In Arabidopsis thaliana (Mouse-ear cress), this protein is Pentatricopeptide repeat-containing protein At1g13040, mitochondrial.